Here is an 89-residue protein sequence, read N- to C-terminus: UPF0223 protein Bcer98_2663 (89 aa).

It belongs to the UPF0223 family.

The polypeptide is UPF0223 protein Bcer98_2663 (Bacillus cytotoxicus (strain DSM 22905 / CIP 110041 / 391-98 / NVH 391-98)).